A 309-amino-acid polypeptide reads, in one-letter code: Porphobilinogen deaminase (309 aa).

Cys-241 is subject to S-(dipyrrolylmethanemethyl)cysteine.

This sequence belongs to the HMBS family. Monomer. Requires dipyrromethane as cofactor.

The catalysed reaction is 4 porphobilinogen + H2O = hydroxymethylbilane + 4 NH4(+). Its pathway is porphyrin-containing compound metabolism; protoporphyrin-IX biosynthesis; coproporphyrinogen-III from 5-aminolevulinate: step 2/4. Tetrapolymerization of the monopyrrole PBG into the hydroxymethylbilane pre-uroporphyrinogen in several discrete steps. The sequence is that of Porphobilinogen deaminase from Bacillus anthracis (strain A0248).